Reading from the N-terminus, the 213-residue chain is MQLPLALCLVCLLVHAAFRVVEGQGWQAFKNDATEIIPELGEYPEPPPELENNKTMNRAENGGRPPHHPFETKDVSEYSCRELHFTRYVTDGPCRSAKPVTELVCSGQCGPARLLPNAIGRGKWWRPSGPDFRCIPDRYRAQRVQLLCPGGAAPRARKVRLVASCKCKRLTRFHNQSELKDFGPEAARPQKGRKPRPRARGAKANQAELENAY.

A signal peptide spans 1-23 (MQLPLALCLVCLLVHAAFRVVEG). The disordered stretch occupies residues 41-71 (GEYPEPPPELENNKTMNRAENGGRPPHHPFE). The N-linked (GlcNAc...) asparagine glycan is linked to N53. 4 cysteine pairs are disulfide-bonded: C80–C134, C94–C148, C105–C165, and C109–C167. Residues 82–172 (ELHFTRYVTD…ASCKCKRLTR (91 aa)) form the CTCK domain. The N-linked (GlcNAc...) asparagine glycan is linked to N175. Residues 178–213 (ELKDFGPEAARPQKGRKPRPRARGAKANQAELENAY) are disordered. Basic residues predominate over residues 190-201 (QKGRKPRPRARG).

This sequence belongs to the sclerostin family. In terms of assembly, interacts with LRP4 (via the extracellular domain); the interaction facilitates the inhibition of Wnt signaling. Interacts with LRP5 (via the first two YWTD-EGF repeat domains); the interaction inhibits Wnt-mediated signaling. Interacts with LRP6.

It is found in the secreted. Its subcellular location is the extracellular space. The protein resides in the extracellular matrix. Functionally, negative regulator of bone growth that acts through inhibition of Wnt signaling and bone formation. The protein is Sclerostin of Chlorocebus aethiops (Green monkey).